A 594-amino-acid chain; its full sequence is CDPK-related kinase 4 (594 aa).

A disordered region spans residues 1–131; that stretch reads MGHCYSRNIS…DSGGGERLDK (131 aa). Gly-2 carries N-myristoyl glycine lipidation. The segment covering 37–58 has biased composition (polar residues); that stretch reads IPQSPVASGTPEVNSYNISPFQ. Positions 116–131 are enriched in basic and acidic residues; sequence VVDHGGDSGGGERLDK. One can recognise a Protein kinase domain in the interval 143–405; that stretch reads YELGKEVGRG…AAQALAHPWL (263 aa). ATP contacts are provided by residues 149 to 157 and Lys-175; that span reads VGRGHFGHT. The active-site Proton acceptor is Asp-271. Phosphoserine is present on Ser-311. The tract at residues 409 to 439 is autoinhibitory domain; that stretch reads NPGLLLDFSVYKLVKSYIRASPFRRSALKAL. Residues 428 to 448 form a calmodulin binding (CaMBD) region; sequence ASPFRRSALKALSKAIPDEEL. EF-hand domains follow at residues 446-481, 482-517, 518-557, and 558-587; these read EELVFLKAQFMLLDPKDGGLSLNCFTMALTRYATDA, MMESRLPDILNTMQPLAQKKLDFEEFCAAAVSVYQL, EALEEWEQIATSAFEHFEHEGNRIISVQELAGEMSVGPSA, and YPLLKDWIRSSDGKLSFLGYAKFLHGVTVR. 8 residues coordinate Ca(2+): Asp-462, Lys-501, Glu-506, Asn-539, Glu-546, Ser-567, Asp-569, and Lys-571. Ser-573 is modified (phosphoserine).

The protein belongs to the protein kinase superfamily. Ser/Thr protein kinase family. CDPK subfamily. Binds calmodulin (CaM) in a calcium-dependent manner. Autophosphorylated.

The protein resides in the cell membrane. The enzyme catalyses L-seryl-[protein] + ATP = O-phospho-L-seryl-[protein] + ADP + H(+). The catalysed reaction is L-threonyl-[protein] + ATP = O-phospho-L-threonyl-[protein] + ADP + H(+). Activated by calcium and calmodulin. Autophosphorylation may play an important role in the regulation of the kinase activity. May play a role in signal transduction pathways that involve calcium as a second messenger. The protein is CDPK-related kinase 4 (CRK4) of Arabidopsis thaliana (Mouse-ear cress).